A 182-amino-acid polypeptide reads, in one-letter code: Ribulose bisphosphate carboxylase small subunit, chloroplastic (182 aa).

Residues 1–58 (MASSMLSTATVASINRVSPAQATMVAPFTGLKSTPVFPTTRKTNSDITSITSNGGKVQ) constitute a chloroplast transit peptide.

It belongs to the RuBisCO small chain family. In terms of assembly, heterohexadecamer of 8 large and 8 small subunits.

The protein localises to the plastid. It localises to the chloroplast. Functionally, ruBisCO catalyzes two reactions: the carboxylation of D-ribulose 1,5-bisphosphate, the primary event in carbon dioxide fixation, as well as the oxidative fragmentation of the pentose substrate. Both reactions occur simultaneously and in competition at the same active site. Although the small subunit is not catalytic it is essential for maximal activity. The protein is Ribulose bisphosphate carboxylase small subunit, chloroplastic of Manihot esculenta (Cassava).